We begin with the raw amino-acid sequence, 1294 residues long: Voltage-gated inwardly rectifying potassium channel KCNH2 (1294 aa).

Topologically, residues 1 to 377 are cytoplasmic; the sequence is RKFIIANARV…RIHRWTILHY (377 aa). The PAS domain maps to 15-44; sequence VIYCNDGFCELCGYSRAEVMQRPCTCDFLH. A PAC domain is found at 66-118; it reads RKVEIAFYRKDGSCFLCLVDVVPVKNEDGAVIMFILNFEVVMEKDMVGSPARD. Residues 207 to 258 are disordered; the sequence is LVAPGSPPSSVPGPPHTSPRAHSLNPDASGSSCSLARTRSRESCASVRRASS. Pro residues predominate over residues 211-223; the sequence is GSPPSSVPGPPHT. Phosphoserine occurs at positions 212 and 216. Over residues 232–243 the composition is skewed to polar residues; it reads PDASGSSCSLAR. Phosphoserine occurs at positions 257, 258, 294, and 325. A helical membrane pass occupies residues 378 to 398; the sequence is SPFKAVWDWLILLLVIYTAVF. Topologically, residues 399–424 are extracellular; it reads TPYSAAFLLKEPEEDAQTADCGYACQ. A helical transmembrane segment spans residues 425–445; sequence PLAVVDLIVDIMFIVDILINF. Residues 446-469 are Cytoplasmic-facing; it reads RTTYVNANEEVVSHPGRIAVHYFK. A helical membrane pass occupies residues 470-490; sequence GWFLIDMVAAIPFDLLIFGSG. The Extracellular segment spans residues 491-494; it reads SEEL. Residues 495 to 515 traverse the membrane as a helical; Voltage-sensor segment; it reads IGLLKTARLLRLVRVARKLDR. The Cytoplasmic portion of the chain corresponds to 516–521; sequence YSEYGA. A helical membrane pass occupies residues 522–542; that stretch reads AVLFLLMCTFALIAHWLACIW. Residues 543 to 585 lie on the Extracellular side of the membrane; that stretch reads YAIGNMEQPDMNSRIGWLHNLGDQIGKPYNSSGLGGPSIKDKY. Residues 586-606 constitute an intramembrane region (pore-forming); sequence VTALYFTFSSLTSVGFGNVSP. The short motif at 598–603 is the Selectivity filter element; it reads SVGFGN. The Extracellular segment spans residues 607–612; the sequence is NTNSEK. The chain crosses the membrane as a helical span at residues 613–633; the sequence is IFSICVMLIGSLMYASIFGNV. Over 634–1294 the chain is Cytoplasmic; that stretch reads SAIIQRLYSG…IAHWLACIWY (661 aa). The cNMP-binding domain stretch occupies residues 716 to 816; the sequence is PFRGATKGCL…IHRDDLLEVL (101 aa). The interval 844–956 is disordered; the sequence is GSPGSTELEG…LTEDGDKSDT (113 aa). Phosphoserine occurs at positions 845 and 848. Residues 857–866 show a composition bias toward basic residues; the sequence is RQRRRKLSFR. Low complexity predominate over residues 902 to 913; the sequence is GDSPSSGPSSPE. An Omega-N-methylarginine modification is found at Arg987. A coiled-coil region spans residues 1008–1035; the sequence is RGDVESRLDALQRQLNRLETRLSADMAT. Ser1110 bears the Phosphoserine mark.

The protein belongs to the potassium channel family. H (Eag) (TC 1.A.1.20) subfamily. Kv11.1/KCNH2 sub-subfamily. In terms of assembly, the potassium channel is probably composed of a homo- or heterotetrameric complex of pore-forming alpha subunits that can associate with modulating beta subunits. Interacts with DNAJB12 and DNAJB14; chaperones DNAJB12 and DNAJB14 promote tetramerization. Heteromultimer with KCNH6/ERG2 and KCNH7/ERG3. Interacts with ALG10B. Forms a stable complex with KCNE1 or KCNE2, and that this heteromultimerization regulates Inward rectifier potassium channel activity. Interacts with CANX. The core-glycosylated, but not the fully glycosylated form interacts with RNF207. Interacts with NDFIP1 and NDFIP2; this interaction decreases the cell membrane expression by targeting KCNH2, through interaction with NEDD4L, for the degradation through the multivesicular bodies (MVBs)-lysosomal pathway. Phosphorylated on serine and threonine residues. Phosphorylation by PKA inhibits ion conduction. As to expression, highly expressed in heart and brain.

The protein resides in the cell membrane. It catalyses the reaction K(+)(in) = K(+)(out). Pore-forming (alpha) subunit of voltage-gated inwardly rectifying potassium channel. Characterized by unusual gating kinetics by producing relatively small outward currents during membrane depolarization and large inward currents during subsequent repolarization which reflect a rapid inactivation during depolarization and quick recovery from inactivation but slow deactivation (closing) during repolarization. Channel properties are modulated by cAMP and subunit assembly. Forms a stable complex with KCNE1 or KCNE2, and that this heteromultimerization regulates inward rectifier potassium channel activity. This is Voltage-gated inwardly rectifying potassium channel KCNH2 from Cavia porcellus (Guinea pig).